Reading from the N-terminus, the 1412-residue chain is ABC transporter C family member 3 (1412 aa).

A disordered region spans residues 1–34 (MELEEVGVEANQPNNDQGSKKQNKNKDKKVKKEK). The span at 21–34 (KQNKNKDKKVKKEK) shows a compositional bias: basic residues. 6 helical membrane passes run 115–135 (FGLY…SQFV), 161–181 (MGYY…VCLY), 236–256 (VFQL…CLAL), 261–281 (IGWP…FNGI), 346–366 (AMLI…VFSS), and 379–399 (IFAA…LPII). The 287-residue stretch at 119 to 405 (FVLSWFFYAI…LPIIVALGIQ (287 aa)) folds into the ABC transmembrane type-1 1 domain. Residues 439–662 (IRDATLTWNQ…QKEFSGLLQA (224 aa)) enclose the ABC transporter 1 domain. An ATP-binding site is contributed by 474-481 (GSVGSGKS). 5 helical membrane-spanning segments follow: residues 724-744 (WKYI…FFLM), 787-807 (IYIG…FLFF), 854-874 (NLMA…VATL), 875-895 (IIIS…CIIF), and 967-987 (WLGL…CLFI). Positions 735–1025 (FLMAFIFFLM…ATLQAADTET (291 aa)) constitute an ABC transmembrane type-1 2 domain. The ABC transporter 2 domain occupies 1062–1296 (ITFDNLVMRY…PAGLLNWLVE (235 aa)). 1096-1103 (GRTGAGKS) contacts ATP. Residues 1316 to 1412 (GVNIDQITPP…DNDNSEAGDN (97 aa)) form a disordered region. The span at 1342–1351 (NINSPPQQSL) shows a compositional bias: polar residues. The span at 1367 to 1397 (DNNNNNNNNNNNNNNNNNNNNNNNNNNNNND) shows a compositional bias: low complexity. Acidic residues predominate over residues 1398-1412 (NDNDNDNDNSEAGDN).

It belongs to the ABC transporter superfamily. ABCC family. Conjugate transporter (TC 3.A.1.208) subfamily.

Its subcellular location is the membrane. The sequence is that of ABC transporter C family member 3 (abcC3) from Dictyostelium discoideum (Social amoeba).